The primary structure comprises 93 residues: Co-chaperonin GroES (93 aa).

It belongs to the GroES chaperonin family. As to quaternary structure, heptamer of 7 subunits arranged in a ring. Interacts with the chaperonin GroEL.

Its subcellular location is the cytoplasm. Together with the chaperonin GroEL, plays an essential role in assisting protein folding. The GroEL-GroES system forms a nano-cage that allows encapsulation of the non-native substrate proteins and provides a physical environment optimized to promote and accelerate protein folding. GroES binds to the apical surface of the GroEL ring, thereby capping the opening of the GroEL channel. The sequence is that of Co-chaperonin GroES from Streptococcus sanguinis.